The sequence spans 364 residues: Chorismate synthase (364 aa).

R48 is a binding site for NADP(+). FMN is bound by residues 126–128 (RSS), G288, 303–307 (KPIAS), and R329.

Belongs to the chorismate synthase family. As to quaternary structure, homotetramer. Requires FMNH2 as cofactor.

It carries out the reaction 5-O-(1-carboxyvinyl)-3-phosphoshikimate = chorismate + phosphate. Its pathway is metabolic intermediate biosynthesis; chorismate biosynthesis; chorismate from D-erythrose 4-phosphate and phosphoenolpyruvate: step 7/7. Catalyzes the anti-1,4-elimination of the C-3 phosphate and the C-6 proR hydrogen from 5-enolpyruvylshikimate-3-phosphate (EPSP) to yield chorismate, which is the branch point compound that serves as the starting substrate for the three terminal pathways of aromatic amino acid biosynthesis. This reaction introduces a second double bond into the aromatic ring system. This chain is Chorismate synthase, found in Desulfovibrio desulfuricans (strain ATCC 27774 / DSM 6949 / MB).